The chain runs to 29 residues: Cyclotide vibi-D (29 aa).

Positions G1 to N29 form a cross-link, cyclopeptide (Gly-Asn). Intrachain disulfides connect C5–C19, C9–C21, and C14–C26.

Post-translationally, this is a cyclic peptide.

Probably participates in a plant defense mechanism. Has moderate levels of cytotoxic activity, active against a human lymphoma cell line with an IC(50) of &gt;30 uM. This chain is Cyclotide vibi-D, found in Viola biflora (Yellow wood violet).